A 198-amino-acid chain; its full sequence is dITP/XTP pyrophosphatase (198 aa).

Residue 7 to 12 (THNPHK) coordinates substrate. The Mg(2+) site is built by E40 and D69. The active-site Proton acceptor is the D69. Substrate contacts are provided by residues T70, 151–154 (FGYD), K174, and 179–180 (HR).

This sequence belongs to the HAM1 NTPase family. As to quaternary structure, homodimer. The cofactor is Mg(2+).

It catalyses the reaction XTP + H2O = XMP + diphosphate + H(+). The catalysed reaction is dITP + H2O = dIMP + diphosphate + H(+). The enzyme catalyses ITP + H2O = IMP + diphosphate + H(+). In terms of biological role, pyrophosphatase that catalyzes the hydrolysis of nucleoside triphosphates to their monophosphate derivatives, with a high preference for the non-canonical purine nucleotides XTP (xanthosine triphosphate), dITP (deoxyinosine triphosphate) and ITP. Seems to function as a house-cleaning enzyme that removes non-canonical purine nucleotides from the nucleotide pool, thus preventing their incorporation into DNA/RNA and avoiding chromosomal lesions. This Thermoanaerobacter pseudethanolicus (strain ATCC 33223 / 39E) (Clostridium thermohydrosulfuricum) protein is dITP/XTP pyrophosphatase.